A 483-amino-acid chain; its full sequence is Probable cytosol aminopeptidase (483 aa).

2 residues coordinate Mn(2+): K252 and D257. The active site involves K264. Positions 275, 334, and 336 each coordinate Mn(2+). The active site involves R338.

It belongs to the peptidase M17 family. Requires Mn(2+) as cofactor.

It is found in the cytoplasm. It catalyses the reaction Release of an N-terminal amino acid, Xaa-|-Yaa-, in which Xaa is preferably Leu, but may be other amino acids including Pro although not Arg or Lys, and Yaa may be Pro. Amino acid amides and methyl esters are also readily hydrolyzed, but rates on arylamides are exceedingly low.. The enzyme catalyses Release of an N-terminal amino acid, preferentially leucine, but not glutamic or aspartic acids.. In terms of biological role, presumably involved in the processing and regular turnover of intracellular proteins. Catalyzes the removal of unsubstituted N-terminal amino acids from various peptides. The sequence is that of Probable cytosol aminopeptidase from Legionella pneumophila (strain Paris).